The chain runs to 642 residues: Polyglycine hydrolase (642 aa).

Positions 1–23 are cleaved as a signal peptide; that stretch reads MYTSRLLLSNLASCLSLATLVAS. Asparagine 37, asparagine 100, asparagine 159, and asparagine 341 each carry an N-linked (GlcNAc...) asparagine glycan. Cysteine 149 and cysteine 183 are joined by a disulfide. Residue serine 370 is part of the active site. Asparagine 390, asparagine 407, asparagine 444, asparagine 487, and asparagine 494 each carry an N-linked (GlcNAc...) asparagine glycan.

The protein belongs to the peptidase S12 family.

The protein resides in the secreted. It catalyses the reaction a glycyl-glycyl-[protein] + H2O = N-terminal glycyl-[protein] + [protein]-C-terminal glycine. Its activity is regulated as follows. Not inhibited by phenylmethylsulfonyl fluoride (PMSF; serine peptidase class S1 inhibitor), clavulanic acid (beta-lactamase inhibitor) or ampicillin (penicillin-binding protein (PBP) inhibitor). In terms of biological role, serine-type endopeptidase that cleaves Gly-Gly bonds in the polyglycine linker of host plant class IV chitinases to disrupt their chitin-binding, and thereby plays a role in lowering the defense responses of the host to the fungus. Degrades Z.mays Endochitinase A (CHIA). Degrades Z.mays Endochitinase B (CHIB). Has no activity on Z.mays CHIA following CHIA cleavage by fungalysin. This Epicoccum sorghinum (Endophyte fungus) protein is Polyglycine hydrolase.